The sequence spans 732 residues: Ubiquitin carboxyl-terminal hydrolase 21 (732 aa).

Positions 1-10 are enriched in pro residues; sequence MAEFSDPPPS. Positions 1–111 are disordered; it reads MAEFSDPPPS…ISPVSNNNHL (111 aa). Polar residues-rich tracts occupy residues 11 to 31 and 38 to 53; these read NLSS…SSPT and VTNS…QIQA. The segment covering 55 to 69 has biased composition (low complexity); it reads SPAKPDGSSSSPPDK. The USP domain maps to 163 to 469; that stretch reads AGLYNSGNTC…PAYILFYARE (307 aa). The active-site Nucleophile is Cys-172. The active-site Proton acceptor is the His-428. The segment at 534-732 is disordered; it reads KEEVFHSAES…SSNMRRSIKL (199 aa). Residues 540–551 are compositionally biased toward low complexity; that stretch reads SAESSNNEDSSA. A compositionally biased stretch (basic and acidic residues) spans 583–609; that stretch reads AYIDKSEKPFAETSQPKEPKPFADRAS. Residues 719 to 732 are compositionally biased toward basic residues; sequence KKKKSSNMRRSIKL.

It belongs to the peptidase C19 family.

The catalysed reaction is Thiol-dependent hydrolysis of ester, thioester, amide, peptide and isopeptide bonds formed by the C-terminal Gly of ubiquitin (a 76-residue protein attached to proteins as an intracellular targeting signal).. Functionally, recognizes and hydrolyzes the peptide bond at the C-terminal Gly of ubiquitin. Involved in the processing of poly-ubiquitin precursors as well as that of ubiquitinated proteins. The protein is Ubiquitin carboxyl-terminal hydrolase 21 (UBP21) of Arabidopsis thaliana (Mouse-ear cress).